Consider the following 538-residue polypeptide: BTB/POZ domain-containing protein 6 (538 aa).

A signal peptide spans 1-17; it reads MLLPLACLHGRVAQCLT. 2 disordered regions span residues 29–53 and 76–115; these read PRRG…PPAK and AAVG…SPGW. A compositionally biased stretch (low complexity) spans 35–53; the sequence is ARGAASTGAEAAPAAPPAK. Positions 85–103 are enriched in pro residues; it reads RSPPSAPAPAPPPPAPAPP. Residues 136–206 enclose the BTB domain; the sequence is ADVHFVVGPP…MYSDEIDLEA (71 aa).

In terms of tissue distribution, expressed in lens.

It localises to the cytoplasm. Functionally, adapter protein for the cul3 E3 ubiquitin-protein ligase complex. Involved in late neuronal development and muscle formation. The polypeptide is BTB/POZ domain-containing protein 6 (Homo sapiens (Human)).